A 421-amino-acid chain; its full sequence is MFTRNMTIADYDPVLWQAIQDENRRQEEHIELIASENYASPRVMEAQGSQFTNKYAEGYPGKRYYGGCEYADIVEQLAIDRAKELFGADYVNVQPHSGSQANAAVYGALINAGDTILGMDLAHGGHLTHGAKVSFSGKIYNSVLYGITADGLIDYEDVRQKALECKPKLIVAGFSAYSQVVDWAKMREIADEVGAYLFVDMAHVAGLIAAGLYLNPLPHAHVVTTTTHKTLGGPRGGLILSSCGDEEIYKKLQSSVFPANQGGPLVHIIAAKAVCFKEALEPQYKEYQANVIKNAKAMVEVFKQRGYDVVSNGTENHLFLVSFIKQGLTGKAADAALGKANITVNKNAVPNDPQKPFVTSGIRVGTPSVTRRGFNENDVRELAGWMCDVLDALGKENEEQVIAETKEKVLAICKRLPVYPK.

Residues Leu121 and 125 to 127 (GHL) contribute to the (6S)-5,6,7,8-tetrahydrofolate site. The residue at position 229 (Lys229) is an N6-(pyridoxal phosphate)lysine.

The protein belongs to the SHMT family. In terms of assembly, homodimer. Pyridoxal 5'-phosphate serves as cofactor.

Its subcellular location is the cytoplasm. The enzyme catalyses (6R)-5,10-methylene-5,6,7,8-tetrahydrofolate + glycine + H2O = (6S)-5,6,7,8-tetrahydrofolate + L-serine. It functions in the pathway one-carbon metabolism; tetrahydrofolate interconversion. It participates in amino-acid biosynthesis; glycine biosynthesis; glycine from L-serine: step 1/1. Its function is as follows. Catalyzes the reversible interconversion of serine and glycine with tetrahydrofolate (THF) serving as the one-carbon carrier. This reaction serves as the major source of one-carbon groups required for the biosynthesis of purines, thymidylate, methionine, and other important biomolecules. Also exhibits THF-independent aldolase activity toward beta-hydroxyamino acids, producing glycine and aldehydes, via a retro-aldol mechanism. In Haemophilus influenzae (strain 86-028NP), this protein is Serine hydroxymethyltransferase.